We begin with the raw amino-acid sequence, 360 residues long: DNA replication and repair protein RecF (360 aa).

Residue 30–37 (GHNGSGKT) participates in ATP binding.

Belongs to the RecF family.

It localises to the cytoplasm. Its function is as follows. The RecF protein is involved in DNA metabolism; it is required for DNA replication and normal SOS inducibility. RecF binds preferentially to single-stranded, linear DNA. It also seems to bind ATP. The sequence is that of DNA replication and repair protein RecF from Shewanella sediminis (strain HAW-EB3).